The primary structure comprises 408 residues: Argininosuccinate synthase (408 aa).

8 to 16 (AYSGGLDTS) serves as a coordination point for ATP. Position 86 (Tyr-86) interacts with L-citrulline. ATP is bound at residue Gly-116. Thr-118, Asn-122, and Asp-123 together coordinate L-aspartate. An L-citrulline-binding site is contributed by Asn-122. L-citrulline-binding residues include Arg-126, Ser-174, Glu-259, and Tyr-271.

The protein belongs to the argininosuccinate synthase family. Type 1 subfamily. As to quaternary structure, homotetramer.

It localises to the cytoplasm. It catalyses the reaction L-citrulline + L-aspartate + ATP = 2-(N(omega)-L-arginino)succinate + AMP + diphosphate + H(+). It functions in the pathway amino-acid biosynthesis; L-arginine biosynthesis; L-arginine from L-ornithine and carbamoyl phosphate: step 2/3. This Leuconostoc mesenteroides subsp. mesenteroides (strain ATCC 8293 / DSM 20343 / BCRC 11652 / CCM 1803 / JCM 6124 / NCDO 523 / NBRC 100496 / NCIMB 8023 / NCTC 12954 / NRRL B-1118 / 37Y) protein is Argininosuccinate synthase.